Here is a 231-residue protein sequence, read N- to C-terminus: Ribosyldihydronicotinamide dehydrogenase [quinone] (231 aa).

FAD contacts are provided by residues H12, 18–21 (FNGS), and 104–107 (LYWF). Position 127–129 (127–129 (FDV)) interacts with substrate. FAD contacts are provided by residues 148 to 151 (TTGG) and Y156. Zn(2+) contacts are provided by H174 and H178. E194 serves as a coordination point for FAD. Residue S197 is modified to Phosphoserine. R201 serves as a coordination point for FAD. C223 is a binding site for Zn(2+).

It belongs to the NAD(P)H dehydrogenase (quinone) family. Homodimer. Requires Zn(2+) as cofactor. The cofactor is FAD.

The protein localises to the cytoplasm. It catalyses the reaction 1-(beta-D-ribofuranosyl)-1,4-dihydronicotinamide + a quinone + H(+) = beta-nicotinamide D-riboside + a quinol. The enzyme apparently serves as a quinone reductase in connection with conjugation reactions of hydroquinones involved in detoxification pathways as well as in biosynthetic processes such as the vitamin K-dependent gamma-carboxylation of glutamate residues in prothrombin synthesis. The protein is Ribosyldihydronicotinamide dehydrogenase [quinone] (Nqo2) of Rattus norvegicus (Rat).